The sequence spans 693 residues: Polyribonucleotide nucleotidyltransferase (693 aa).

Residues Asp-489 and Asp-495 each coordinate Mg(2+). Residues 556–615 (PQIHIMNVNPAKIKDVVGRGGSVVKGIVEKTGAQIDTSDSGEVKIFAKDKRSLDLAKSMV) enclose the KH domain. Residues 625–693 (GQIYKGKIVK…GRVKLSLVAR (69 aa)) enclose the S1 motif domain.

It belongs to the polyribonucleotide nucleotidyltransferase family. As to quaternary structure, component of the RNA degradosome, which is a multiprotein complex involved in RNA processing and mRNA degradation. Mg(2+) serves as cofactor.

The protein localises to the cytoplasm. The enzyme catalyses RNA(n+1) + phosphate = RNA(n) + a ribonucleoside 5'-diphosphate. In terms of biological role, involved in mRNA degradation. Catalyzes the phosphorolysis of single-stranded polyribonucleotides processively in the 3'- to 5'-direction. The sequence is that of Polyribonucleotide nucleotidyltransferase from Francisella philomiragia subsp. philomiragia (strain ATCC 25017 / CCUG 19701 / FSC 153 / O#319-036).